We begin with the raw amino-acid sequence, 435 residues long: 5-methylthioadenosine/S-adenosylhomocysteine deaminase (435 aa).

Residues H65 and H67 each contribute to the Zn(2+) site. The substrate site is built by E94, R150, and H189. Residue H216 coordinates Zn(2+). E219 and D304 together coordinate substrate. A Zn(2+)-binding site is contributed by D304.

This sequence belongs to the metallo-dependent hydrolases superfamily. MTA/SAH deaminase family. Requires Zn(2+) as cofactor.

It carries out the reaction S-adenosyl-L-homocysteine + H2O + H(+) = S-inosyl-L-homocysteine + NH4(+). The catalysed reaction is S-methyl-5'-thioadenosine + H2O + H(+) = S-methyl-5'-thioinosine + NH4(+). Functionally, catalyzes the deamination of 5-methylthioadenosine and S-adenosyl-L-homocysteine into 5-methylthioinosine and S-inosyl-L-homocysteine, respectively. Is also able to deaminate adenosine. The protein is 5-methylthioadenosine/S-adenosylhomocysteine deaminase of Bacillus cereus (strain G9842).